The chain runs to 644 residues: Threonine--tRNA ligase (644 aa).

The TGS domain occupies 1 to 61; that stretch reads MVAITLPDGS…AHDAKVEIVT (61 aa). The catalytic stretch occupies residues 242–533; sequence DHRKIGKALN…LIENYAGWMP (292 aa). Zn(2+) contacts are provided by cysteine 333, histidine 384, and histidine 510.

This sequence belongs to the class-II aminoacyl-tRNA synthetase family. Homodimer. The cofactor is Zn(2+).

It is found in the cytoplasm. It carries out the reaction tRNA(Thr) + L-threonine + ATP = L-threonyl-tRNA(Thr) + AMP + diphosphate + H(+). Its function is as follows. Catalyzes the attachment of threonine to tRNA(Thr) in a two-step reaction: L-threonine is first activated by ATP to form Thr-AMP and then transferred to the acceptor end of tRNA(Thr). Also edits incorrectly charged L-seryl-tRNA(Thr). This chain is Threonine--tRNA ligase, found in Psychrobacter cryohalolentis (strain ATCC BAA-1226 / DSM 17306 / VKM B-2378 / K5).